Here is a 304-residue protein sequence, read N- to C-terminus: Thyroxine 5-deiodinase (304 aa).

The interval 1–23 is disordered; it reads MPRQATSRLVVGEGEGSQGASGP. Residues 1–44 lie on the Cytoplasmic side of the membrane; it reads MPRQATSRLVVGEGEGSQGASGPAATMLRSLLLHSLRLCAQTAS. Residues 45–67 traverse the membrane as a helical; Signal-anchor for type II membrane protein segment; the sequence is CLVLFPRFLGTAFMLWLLDFLCI. The Extracellular segment spans residues 68–304; it reads RKHFLGRRRR…QLHGARPRRV (237 aa). Residues 78-99 form a disordered region; sequence GQPEPEVELNSEGEEVPPDDPP. The span at 82-95 shows a compositional bias: acidic residues; the sequence is PEVELNSEGEEVPP. Residue U170 is part of the active site. Residue U170 is a non-standard amino acid, selenocysteine.

Belongs to the iodothyronine deiodinase family. As to quaternary structure, monomer. Homodimer. May undergo minor heretodimerization with DIO1 and DIO2. Expressed in placenta and several fetal tissues.

It is found in the cell membrane. The protein resides in the endosome membrane. The catalysed reaction is 3,3',5'-triiodo-L-thyronine + iodide + A + H(+) = L-thyroxine + AH2. It carries out the reaction 3,3'-diiodo-L-thyronine + iodide + A + H(+) = 3,3',5-triiodo-L-thyronine + AH2. The enzyme catalyses 3-iodo-L-thyronine + iodide + A + H(+) = 3,5-diiodo-L-thyronine + AH2. It catalyses the reaction L-thyronine + iodide + A + H(+) = 3-iodo-L-thyronine + AH2. The catalysed reaction is 3',5'-diiodo-L-thyronine + iodide + A + H(+) = 3,3',5'-triiodo-L-thyronine + AH2. It carries out the reaction 3'-iodo-L-thyronine + iodide + A + H(+) = 3,3'-diiodo-L-thyronine + AH2. The enzyme catalyses 3,3',5'-triiodothyronamine + iodide + A + H(+) = 3,3',5,5'-tetraiodothyronamine + AH2. It catalyses the reaction 3',5'-diiodothyronamine + iodide + A + H(+) = 3,3',5'-triiodothyronamine + AH2. The catalysed reaction is 3,3'-diiodothyronamine + iodide + A + H(+) = 3,3',5-triiodothyronamine + AH2. It carries out the reaction 3-iodothyronamine + iodide + A + H(+) = 3,5-diiodothyronamine + AH2. The enzyme catalyses 3'-iodothyronamine + iodide + A + H(+) = 3,3'-diiodothyronamine + AH2. It catalyses the reaction thyronamine + iodide + A + H(+) = 3-iodothyronamine + AH2. Functionally, plays a crucial role in the metabolism of thyroid hormones (TH) and has specific roles in TH activation and inactivation by deiodination. Catalyzes the deiodination of L-thyroxine (T4) to 3,3',5'-triiodothyronine (rT3), 3,5,3'-triiodothyronine (T3) to 3,3'-diiodothyronine (3,3'-T2), 3,5-diiodothyronine (3,5-T2) to 3-monoiodothyronine (3-T1), rT3 to 3',5'-diiodothyronine (3',5'-T2) and 3,3'-T2 to 3'-monoiodothyronine (3'-T1) via inner-ring deiodination (IRD). Catalyzes the deiodination of 3-T1 to L-thyronine (T0) via outer-ring deiodination (ORD). Catalyzes the tyrosyl ring deiodinations of 3,3',5,5'-tetraiodothyronamine, 3,3',5'-triiodothyronamine, 3,5,3'-triiodothyronamine, 3,5-diiodothyronamine, 3,3'-diiodothyronamine and 3-iodothyronamine. The sequence is that of Thyroxine 5-deiodinase (DIO3) from Homo sapiens (Human).